Consider the following 196-residue polypeptide: DnaA initiator-associating protein DiaA (196 aa).

The region spanning 34–196 is the SIS domain; that stretch reads MVQSLLNGNK…DNTLFPHQND (163 aa).

It belongs to the SIS family. DiaA subfamily. As to quaternary structure, homotetramer; dimer of dimers.

Its function is as follows. Required for the timely initiation of chromosomal replication via direct interactions with the DnaA initiator protein. This Pectobacterium carotovorum subsp. carotovorum (strain PC1) protein is DnaA initiator-associating protein DiaA.